The chain runs to 1237 residues: Phosphorylase b kinase regulatory subunit alpha, skeletal muscle isoform (1237 aa).

4 positions are modified to phosphoserine: Ser629, Ser729, Ser735, and Ser758. Residues 810–840 (LTELYGKVGKIRHWGLIRYISGILRKKVEAL) form a calmodulin-binding region. Residue Ser972 is modified to Phosphoserine; by autocatalysis. Phosphoserine is present on Ser981. 2 positions are modified to phosphoserine; by autocatalysis: Ser985 and Ser1007. Residue Ser1018 is modified to Phosphoserine; by PKA. Phosphoserine occurs at positions 1020, 1023, and 1030. Residues 1021–1069 (TESQPNGGHSLGADLMSPSFLSPGTSVTPSSGSFPGHHTSKDSRQGQWQ) are disordered. The segment covering 1042–1056 (SPGTSVTPSSGSFPG) has biased composition (low complexity). Residues 1060 to 1100 (SKDSRQGQWQRRRRLDGALNRVPIGFYQKVWKVLQKCHGLS) form a calmodulin-binding region. Ser1127 carries the phosphoserine modification. Cys1234 is lipidated: S-farnesyl cysteine.

Belongs to the phosphorylase b kinase regulatory chain family. Hexadecamer of 4 heterotetramers, each composed of alpha, beta, gamma, and delta subunits. Alpha (PHKA1 or PHKA2) and beta (PHKB) are regulatory subunits, gamma (PHKG1 or PHKG2) is the catalytic subunit, and delta is calmodulin. Post-translationally, phosphorylation of Ser-1018 by PKA stimulates the dephosphorylation of the beta subunit and, thus, reverses the initial stimulation of PHK by the faster beta-subunit phosphorylation by PKA, that occurs in muscle in response to adrenaline. Cys-1234 is farnesylated, but the C-terminal tripeptide is not removed and the cysteine carboxyl is not methylated. In terms of tissue distribution, isoform 1 predominates in muscle, heart, brain and testis. Isoforms 1 and 2 are expressed in similar quantities in the other tissues. Isoform 3 is highly expressed in slow muscle and heart.

The protein localises to the cell membrane. The protein operates within glycan biosynthesis; glycogen metabolism. By phosphorylation of various serine residues and by calcium. Its function is as follows. Phosphorylase b kinase catalyzes the phosphorylation of serine in certain substrates, including troponin I. The alpha chain may bind calmodulin. In Oryctolagus cuniculus (Rabbit), this protein is Phosphorylase b kinase regulatory subunit alpha, skeletal muscle isoform (PHKA1).